A 313-amino-acid chain; its full sequence is Aspartate carbamoyltransferase catalytic subunit (313 aa).

Residues Arg-58 and Thr-59 each coordinate carbamoyl phosphate. Lys-86 contacts L-aspartate. Residues Arg-108, His-136, and Gln-139 each coordinate carbamoyl phosphate. L-aspartate contacts are provided by Arg-169 and Arg-223. Positions 264 and 265 each coordinate carbamoyl phosphate.

It belongs to the aspartate/ornithine carbamoyltransferase superfamily. ATCase family. As to quaternary structure, heterododecamer (2C3:3R2) of six catalytic PyrB chains organized as two trimers (C3), and six regulatory PyrI chains organized as three dimers (R2).

It catalyses the reaction carbamoyl phosphate + L-aspartate = N-carbamoyl-L-aspartate + phosphate + H(+). The protein operates within pyrimidine metabolism; UMP biosynthesis via de novo pathway; (S)-dihydroorotate from bicarbonate: step 2/3. Functionally, catalyzes the condensation of carbamoyl phosphate and aspartate to form carbamoyl aspartate and inorganic phosphate, the committed step in the de novo pyrimidine nucleotide biosynthesis pathway. The chain is Aspartate carbamoyltransferase catalytic subunit from Ruminiclostridium cellulolyticum (strain ATCC 35319 / DSM 5812 / JCM 6584 / H10) (Clostridium cellulolyticum).